Consider the following 122-residue polypeptide: MTAGTRPEVLHLYRQIFRIARKWQAASGLMEETIKEREYIVDEARKLFHRNKQITDVAMIKECTEECKARIEIGLHYRNPYPRPIHLPPLGLALPHSKVFRAQEKLRKQAKPVYLKSYDEIS.

Belongs to the complex I LYR family.

The polypeptide is LYR motif-containing protein 1 (lyrm1) (Xenopus laevis (African clawed frog)).